The sequence spans 113 residues: Cell cycle protein GpsB (113 aa).

Residues 36–65 are a coiled coil; that stretch reads IKDYETYAALVKSLRQEIADLKEELARKPQ. A disordered region spans residues 61–82; the sequence is ARKPQVSSAPSPSHPDPIDVAA.

This sequence belongs to the GpsB family. Forms polymers through the coiled coil domains. Interacts with PBP1, MreC and EzrA.

Its subcellular location is the cytoplasm. Functionally, divisome component that associates with the complex late in its assembly, after the Z-ring is formed, and is dependent on DivIC and PBP2B for its recruitment to the divisome. Together with EzrA, is a key component of the system that regulates PBP1 localization during cell cycle progression. Its main role could be the removal of PBP1 from the cell pole after pole maturation is completed. Also contributes to the recruitment of PBP1 to the division complex. Not essential for septum formation. The sequence is that of Cell cycle protein GpsB from Streptococcus pneumoniae (strain Hungary19A-6).